We begin with the raw amino-acid sequence, 444 residues long: Ribosomal protein uS12 methylthiotransferase RimO (444 aa).

Residues 4–118 (YKIGLISLGC…IQNYIDDFFN (115 aa)) form the MTTase N-terminal domain. [4Fe-4S] cluster is bound by residues Cys-13, Cys-48, Cys-81, Cys-155, Cys-159, and Cys-162. In terms of domain architecture, Radical SAM core spans 141–371 (TTAKHMAYIR…MSIQQNVSSK (231 aa)). In terms of domain architecture, TRAM spans 374–440 (KNKLEKVYKV…EYDLIGVVCD (67 aa)).

It belongs to the methylthiotransferase family. RimO subfamily. [4Fe-4S] cluster serves as cofactor.

It localises to the cytoplasm. The catalysed reaction is L-aspartate(89)-[ribosomal protein uS12]-hydrogen + (sulfur carrier)-SH + AH2 + 2 S-adenosyl-L-methionine = 3-methylsulfanyl-L-aspartate(89)-[ribosomal protein uS12]-hydrogen + (sulfur carrier)-H + 5'-deoxyadenosine + L-methionine + A + S-adenosyl-L-homocysteine + 2 H(+). Its function is as follows. Catalyzes the methylthiolation of an aspartic acid residue of ribosomal protein uS12. This Clostridium novyi (strain NT) protein is Ribosomal protein uS12 methylthiotransferase RimO.